Reading from the N-terminus, the 489-residue chain is 3-octaprenyl-4-hydroxybenzoate carboxy-lyase (489 aa).

Asn-172 is a Mn(2+) binding site. Residues 175-177 (IYR), 189-191 (RWL), and 194-195 (RG) contribute to the prenylated FMN site. Glu-238 is a binding site for Mn(2+). The active-site Proton donor is the Asp-287.

The protein belongs to the UbiD family. As to quaternary structure, homohexamer. Requires prenylated FMN as cofactor. It depends on Mn(2+) as a cofactor.

The protein localises to the cell membrane. The catalysed reaction is a 4-hydroxy-3-(all-trans-polyprenyl)benzoate + H(+) = a 2-(all-trans-polyprenyl)phenol + CO2. Its pathway is cofactor biosynthesis; ubiquinone biosynthesis. Its function is as follows. Catalyzes the decarboxylation of 3-octaprenyl-4-hydroxy benzoate to 2-octaprenylphenol, an intermediate step in ubiquinone biosynthesis. The chain is 3-octaprenyl-4-hydroxybenzoate carboxy-lyase from Aeromonas hydrophila subsp. hydrophila (strain ATCC 7966 / DSM 30187 / BCRC 13018 / CCUG 14551 / JCM 1027 / KCTC 2358 / NCIMB 9240 / NCTC 8049).